The sequence spans 449 residues: Probable glycine dehydrogenase (decarboxylating) subunit 1 (449 aa).

The protein belongs to the GcvP family. N-terminal subunit subfamily. As to quaternary structure, the glycine cleavage system is composed of four proteins: P, T, L and H. In this organism, the P 'protein' is a heterodimer of two subunits.

The enzyme catalyses N(6)-[(R)-lipoyl]-L-lysyl-[glycine-cleavage complex H protein] + glycine + H(+) = N(6)-[(R)-S(8)-aminomethyldihydrolipoyl]-L-lysyl-[glycine-cleavage complex H protein] + CO2. Its function is as follows. The glycine cleavage system catalyzes the degradation of glycine. The P protein binds the alpha-amino group of glycine through its pyridoxal phosphate cofactor; CO(2) is released and the remaining methylamine moiety is then transferred to the lipoamide cofactor of the H protein. This is Probable glycine dehydrogenase (decarboxylating) subunit 1 from Oceanobacillus iheyensis (strain DSM 14371 / CIP 107618 / JCM 11309 / KCTC 3954 / HTE831).